The sequence spans 76 residues: Heat shock factor-binding protein 1 (76 aa).

This sequence belongs to the HSBP1 family. In terms of assembly, homohexamer. Associates with heptad repeats of HSF1 trimers and probably also HSF1 monomers, and with HSP70. Association with HSF1 trimers and HSP70 coincides with attenuation of heat shock response and the conversion of HSF1 trimer to monomer.

It localises to the nucleus. Functionally, negative regulator of the heat shock response. Negatively affects HSF1 DNA-binding activity. May have a role in the suppression of the activation of the stress response during the aging process. This chain is Heat shock factor-binding protein 1 (Hsbp1), found in Mus musculus (Mouse).